Consider the following 226-residue polypeptide: Glyceraldehyde 3-phosphate phosphatase (226 aa).

This sequence belongs to the HAD-like hydrolase superfamily. Requires Mg(2+) as cofactor.

Its function is as follows. Catalyzes the dephosphorylation of D,L-glyceraldehyde 3-phosphate in vitro. In Methanothermobacter thermautotrophicus (strain ATCC 29096 / DSM 1053 / JCM 10044 / NBRC 100330 / Delta H) (Methanobacterium thermoautotrophicum), this protein is Glyceraldehyde 3-phosphate phosphatase.